A 116-amino-acid chain; its full sequence is Small ribosomal subunit protein uS13 (116 aa).

The disordered stretch occupies residues 88 to 116; that stretch reads GSRHKKGLPVRGQHTKNNARTRKGPRKQA.

The protein belongs to the universal ribosomal protein uS13 family. In terms of assembly, part of the 30S ribosomal subunit. Forms a loose heterodimer with protein S19. Forms two bridges to the 50S subunit in the 70S ribosome.

Functionally, located at the top of the head of the 30S subunit, it contacts several helices of the 16S rRNA. In the 70S ribosome it contacts the 23S rRNA (bridge B1a) and protein L5 of the 50S subunit (bridge B1b), connecting the 2 subunits; these bridges are implicated in subunit movement. Contacts the tRNAs in the A and P-sites. The chain is Small ribosomal subunit protein uS13 from Finegoldia magna (strain ATCC 29328 / DSM 20472 / WAL 2508) (Peptostreptococcus magnus).